We begin with the raw amino-acid sequence, 346 residues long: Galactitol 1-phosphate 5-dehydrogenase (346 aa).

Residues Cys38, His59, Cys89, Cys92, Cys95, Cys103, and Glu144 each coordinate Zn(2+).

The protein belongs to the zinc-containing alcohol dehydrogenase family. It depends on Zn(2+) as a cofactor.

The catalysed reaction is galactitol 1-phosphate + NAD(+) = keto-D-tagatose 6-phosphate + NADH + H(+). Functionally, converts galactitol 1-phosphate to tagatose 6-phosphate. In Escherichia coli O157:H7, this protein is Galactitol 1-phosphate 5-dehydrogenase (gatD).